We begin with the raw amino-acid sequence, 131 residues long: Large ribosomal subunit protein bL17 (131 aa).

It belongs to the bacterial ribosomal protein bL17 family. As to quaternary structure, part of the 50S ribosomal subunit. Contacts protein L32.

The sequence is that of Large ribosomal subunit protein bL17 from Shewanella frigidimarina (strain NCIMB 400).